We begin with the raw amino-acid sequence, 405 residues long: Phosphoglycerate kinase (405 aa).

Substrate is bound by residues 21–23, R36, 59–62, R119, and R161; these read DFN and HLGR. ATP-binding positions include K212, G301, E332, and 361–364; that span reads GGDS.

This sequence belongs to the phosphoglycerate kinase family. As to quaternary structure, monomer.

It is found in the cytoplasm. It catalyses the reaction (2R)-3-phosphoglycerate + ATP = (2R)-3-phospho-glyceroyl phosphate + ADP. It functions in the pathway carbohydrate degradation; glycolysis; pyruvate from D-glyceraldehyde 3-phosphate: step 2/5. This Leuconostoc mesenteroides subsp. mesenteroides (strain ATCC 8293 / DSM 20343 / BCRC 11652 / CCM 1803 / JCM 6124 / NCDO 523 / NBRC 100496 / NCIMB 8023 / NCTC 12954 / NRRL B-1118 / 37Y) protein is Phosphoglycerate kinase.